The following is a 370-amino-acid chain: Ribosomal RNA small subunit methyltransferase H (370 aa).

Residues Gly-85 to His-87, Asp-104, Tyr-131, Asp-152, and Gln-159 contribute to the S-adenosyl-L-methionine site. Composition is skewed to basic and acidic residues over residues Gly-332 to Pro-345 and Arg-353 to Arg-370. The tract at residues Gly-332–Arg-370 is disordered.

It belongs to the methyltransferase superfamily. RsmH family.

The protein resides in the cytoplasm. It carries out the reaction cytidine(1402) in 16S rRNA + S-adenosyl-L-methionine = N(4)-methylcytidine(1402) in 16S rRNA + S-adenosyl-L-homocysteine + H(+). Functionally, specifically methylates the N4 position of cytidine in position 1402 (C1402) of 16S rRNA. This Mycobacterium sp. (strain KMS) protein is Ribosomal RNA small subunit methyltransferase H.